A 352-amino-acid polypeptide reads, in one-letter code: MAQDDNRSKALNAALSQIERQFGKGAVMRLGDTPRVATPAISTGSLGLDIALGVGGLPMGRVVEIFGPESSGKTTMTLSVIAQGQKQGKTCAFIDAEHALDPTYAEKLGVNLDDLLVSQPDTGEQALEICDMLVRSGGVDVIVVDSVAALTPRAEIEGEMGDSHVGLQARLMSQALRKVTGNIKNANCMVMFVNQIRMKIGVMFGNPETTTGGNALKFYSSVRLDIRRTGSVKQGDEAIGNETRVKVVKNKVAPPFRQAEFQILYGKGIYHAGEVVDIGVQQGLVDKAGAWYSYQGNKIGQGKANAAQFLEDNPAIMEEIENEIRARLLSTPKPEAESQEKAAAAQDDDSLV.

67 to 74 (GPESSGKT) is a binding site for ATP. Positions 330–352 (STPKPEAESQEKAAAAQDDDSLV) are disordered.

It belongs to the RecA family.

It is found in the cytoplasm. Can catalyze the hydrolysis of ATP in the presence of single-stranded DNA, the ATP-dependent uptake of single-stranded DNA by duplex DNA, and the ATP-dependent hybridization of homologous single-stranded DNAs. It interacts with LexA causing its activation and leading to its autocatalytic cleavage. The chain is Protein RecA from Chromohalobacter salexigens (strain ATCC BAA-138 / DSM 3043 / CIP 106854 / NCIMB 13768 / 1H11).